The primary structure comprises 185 residues: Tetratricopeptide repeat protein 36 homolog (185 aa).

3 TPR repeats span residues serine 53–alanine 86, valine 88–glutamine 119, and cysteine 125–phenylalanine 158.

It belongs to the TTC36 family.

This is Tetratricopeptide repeat protein 36 homolog from Drosophila pseudoobscura pseudoobscura (Fruit fly).